The sequence spans 245 residues: MMDPNSTSEDVKFTPDPYQVPFVQAFDQATRVYQDLGGPSQAPLPCVLWPVLPEPLPQGQLTAYHVSAAPTGSWFPAPQPAPENAYQAYAAPQLFPVSDITQNQLTNQAGGEAPQPGDNSTVQPAAAVVLACPGANQEQQLADIGAPQPAPAAAPARRTRKPLQPESLEECDSELEIKRYKNRVASRKCRAKFKHLLQHYREVASAKSSENDRLRLLLKQMCPSLDVDSIIPRTPDVLHEDLLNF.

The segment at 1-167 (MMDPNSTSED…RTRKPLQPES (167 aa)) is transactivation. T14 and T159 each carry phosphothreonine. The disordered stretch occupies residues 145 to 167 (GAPQPAPAAAPARRTRKPLQPES). A Bipartite nuclear localization signal motif is present at residues 157 to 194 (RRTRKPLQPESLEECDSELEIKRYKNRVASRKCRAKFK). A phosphoserine mark is found at S167, S173, and S186. Residues 178–195 (KRYKNRVASRKCRAKFKH) form a basic motif region. The 51-residue stretch at 178–228 (KRYKNRVASRKCRAKFKHLLQHYREVASAKSSENDRLRLLLKQMCPSLDVD) folds into the bZIP domain. Residues 196 to 228 (LLQHYREVASAKSSENDRLRLLLKQMCPSLDVD) form a leucine-zipper region. The interval 229 to 245 (SIIPRTPDVLHEDLLNF) is accessory activation domain.

The protein belongs to the bZIP family. In terms of assembly, homodimer. Interacts (via b-ZIP domain) with the DNA polymerase processivity factor BMRF1 (via N-terminus); this interaction may inhibit BZLF1-induced transcription of the BMRF1 promoter. Interacts with human UBN1, CRTC2 and RACK1. Interacts (via N-terminus) with human PAX5 (via N-terminus); this interaction inhibits BZLF1-mediated lytic viral reactivation. Interacts (via leucine-zipper domain) with host CEBPA; this interaction induces G1 host cell cycle arrest. Interacts (via C-terminus) with host TP53BP1 (via C-terminus); this interaction is involved in the activation of the viral lytic cycle. Interacts with host chromatin-remodeling ATPase INO80; this interaction participates to the activation of early lytic viral genes by BZLF1. Interacts with host regulator of chromatin SMARCA5/hSNF2H; this interaction participates to the activation of early lytic viral genes by BZLF1. Interacts with host PLSCR1/Phospholipid scramblase 1; this interaction negatively regulates the transcriptional regulatory activity of BZLF1 by preventing the formation of the BZLF1-CBP complex.

Its subcellular location is the host nucleus. In terms of biological role, transcription factor that acts as a molecular switch to induce the transition from the latent to the lytic or productive phase of the virus cycle. Mediates the switch from the latent to the lytic cycle of infection in cells containing a highly methylated viral genome. Probably binds to silenced chromatin and recruits host chromatin-remodeling enzymes. Regulates this switch by binding to 2 types of ZEBRA response elements (ZREs): the CpG-free AP-1 like elements (latency) and the methylated CpG-containing elements (lytic replication). Activates preferentially the methylated forms of the viral lytic R (BRLF1) and Na (BRRF1) gene promoters, the latters being the first genes activated during Z-mediated reactivation in latently infected cells. BZLF1 and BRLF1 act together to trigger lytic replication. Also binds the lytic origin of replication, oriLyt. Induces G1 cell cycle arrest by stabilizing the host CCAAT/enhancer binding protein CEBPA. This function is important because the lytic cycle preferentially takes place in host cells arrested in G1. This chain is Lytic switch protein BZLF1, found in Homo sapiens (Human).